The following is a 309-amino-acid chain: Homoserine kinase (309 aa).

An ATP-binding site is contributed by 91–101 (PIGSGLGSSAC).

This sequence belongs to the GHMP kinase family. Homoserine kinase subfamily.

It is found in the cytoplasm. It catalyses the reaction L-homoserine + ATP = O-phospho-L-homoserine + ADP + H(+). Its pathway is amino-acid biosynthesis; L-threonine biosynthesis; L-threonine from L-aspartate: step 4/5. In terms of biological role, catalyzes the ATP-dependent phosphorylation of L-homoserine to L-homoserine phosphate. This Buchnera aphidicola subsp. Schizaphis graminum (strain Sg) protein is Homoserine kinase.